The sequence spans 525 residues: Tubulin-specific chaperone E (525 aa).

The 45-residue stretch at 33–77 (GKVDGFEGNWYGIEWDDPKRGKHQGTVKGKQYFKCINKGSGSFMK) folds into the CAP-Gly domain. LRR repeat units follow at residues 300-321 (TLKSLDLANNNIKSFNDILSSL), 326-347 (QLTELNLNNNQITDIEFNGDVD), and 362-383 (NLKRIYLSNNKINDWKYLDKLD). The disordered stretch occupies residues 414–444 (ENEIENDIENNNNNIKKDNNNNNKNNKNNKN). Residues 422 to 444 (ENNNNNIKKDNNNNNKNNKNNKN) show a composition bias toward low complexity. Positions 441 to 481 (NNKNNKTIFLNRLNIIPRLSNLKKLNLSDITLLERKDAELY) constitute an LRRCT domain.

It belongs to the TBCE family. As to quaternary structure, supercomplex made of cofactors A to E. Cofactors A and D function by capturing and stabilizing tubulin in a quasi-native conformation. Cofactor E binds to the cofactor D-tubulin complex; interaction with cofactor C then causes the release of tubulin polypeptides that are committed to the native state.

It is found in the cytoplasm. The protein resides in the cytoskeleton. Its function is as follows. Tubulin-folding protein; involved in the second step of the tubulin folding pathway. The sequence is that of Tubulin-specific chaperone E (tbce) from Dictyostelium discoideum (Social amoeba).